The chain runs to 545 residues: Chaperonin GroEL (545 aa).

ATP-binding positions include Thr-30–Pro-33, Lys-51, Asp-87–Thr-91, Gly-415, and Asp-496.

This sequence belongs to the chaperonin (HSP60) family. As to quaternary structure, forms a cylinder of 14 subunits composed of two heptameric rings stacked back-to-back. Interacts with the co-chaperonin GroES.

It localises to the cytoplasm. It catalyses the reaction ATP + H2O + a folded polypeptide = ADP + phosphate + an unfolded polypeptide.. In terms of biological role, together with its co-chaperonin GroES, plays an essential role in assisting protein folding. The GroEL-GroES system forms a nano-cage that allows encapsulation of the non-native substrate proteins and provides a physical environment optimized to promote and accelerate protein folding. The chain is Chaperonin GroEL from Haemophilus influenzae (strain 86-028NP).